Here is a 204-residue protein sequence, read N- to C-terminus: High frequency lysogenization protein HflD homolog (204 aa).

This sequence belongs to the HflD family.

The protein localises to the cytoplasm. The protein resides in the cell inner membrane. In Xanthomonas euvesicatoria pv. vesicatoria (strain 85-10) (Xanthomonas campestris pv. vesicatoria), this protein is High frequency lysogenization protein HflD homolog.